The chain runs to 281 residues: 2,3,4,5-tetrahydropyridine-2,6-dicarboxylate N-succinyltransferase (281 aa).

R108 and D145 together coordinate substrate.

Belongs to the transferase hexapeptide repeat family. In terms of assembly, homotrimer.

It is found in the cytoplasm. It carries out the reaction (S)-2,3,4,5-tetrahydrodipicolinate + succinyl-CoA + H2O = (S)-2-succinylamino-6-oxoheptanedioate + CoA. It participates in amino-acid biosynthesis; L-lysine biosynthesis via DAP pathway; LL-2,6-diaminopimelate from (S)-tetrahydrodipicolinate (succinylase route): step 1/3. This is 2,3,4,5-tetrahydropyridine-2,6-dicarboxylate N-succinyltransferase from Parvibaculum lavamentivorans (strain DS-1 / DSM 13023 / NCIMB 13966).